The following is a 92-amino-acid chain: Signal recognition particle 19 kDa protein (92 aa).

Belongs to the SRP19 family. Part of the signal recognition particle protein translocation system, which is composed of SRP and FtsY. Archaeal SRP consists of a 7S RNA molecule of 300 nucleotides and two protein subunits: SRP54 and SRP19.

Its subcellular location is the cytoplasm. Involved in targeting and insertion of nascent membrane proteins into the cytoplasmic membrane. Binds directly to 7S RNA and mediates binding of the 54 kDa subunit of the SRP. The polypeptide is Signal recognition particle 19 kDa protein (Haloarcula marismortui (strain ATCC 43049 / DSM 3752 / JCM 8966 / VKM B-1809) (Halobacterium marismortui)).